A 337-amino-acid chain; its full sequence is MKTLCTHSLPKEKMPYLLRSGEGERYLFGRQVATVMANGRSTGDLFEIVLLSGGKGDAFPLHVHKDTHEGILVLDGKLELTLDGERYLLISGDYANIPAGTPHSYRMQSHRTRLVSYTMKGNVAHLYSVIGNPYDHAEHPPYASEEVSNERFAEAAAVADIVFLDEAKPACSAKLAELTELPDGAVPYVLESGEGDRLLTGDQLHRIVAAQKNTDGQFIVVSSEGPKGDRIVDHYHEYHTETFYCLEGQMTMWTDGQEIQLNPGDFLHVPANTVHSYRLDSHYTKMVGVLVPGLFEPFFRTLGDPYEGHIFPCEPQALRFDRILQNIEALDLKVMKP.

Cupin type-2 domains follow at residues 55 to 110 and 226 to 281; these read KGDA…MQSH and PKGD…RLDS. Fe cation-binding residues include His-62, His-64, Glu-69, His-103, His-234, His-236, Glu-241, and His-275.

As to quaternary structure, homodimer. The cofactor is Fe(2+).

It carries out the reaction quercetin + O2 = 2-(3,4-dihydroxybenzoyloxy)-4,6-dihydroxybenzoate + CO. It participates in flavonoid metabolism; quercetin degradation. Its function is as follows. Performs the first step in the degradation of the flavonoid quercetin by a dioxygenase reaction. The enzyme catalyzes the cleavage of the O-heteroaromatic ring of the flavonol quercetin yielding the depside 2-protocatechuoyl-phloroglucinol carboxylic acid and carbon monoxide. This involves the remarkable dioxygenolytic cleavage of two carbon-carbon bonds. This Bacillus subtilis (strain 168) protein is Quercetin 2,3-dioxygenase (qdoI).